The following is a 735-amino-acid chain: Protein-associating with the carboxyl-terminal domain of ezrin (735 aa).

Glycine 2 carries the N-myristoyl glycine lipid modification. Positions 2–245 (GSENSALKSY…LSTLLSHDFF (244 aa)) constitute a Protein kinase domain. HEAT repeat units follow at residues 194–249 (FGAL…RNDF), 285–323 (LIASRLVPLLLNQLVFAEPVAVKSFLPYLLGPKKENAPG), 333–370 (LFQSRVIPVLLRLFEVHEEHVRMVLLSHIEAYVEHFTQ), and 372–409 (QLKKVILPQVLLGLRDTSNSIVAITLRSLAVLVSLLGP). Serine 439 carries the post-translational modification Phosphoserine. 2 disordered regions span residues 505–545 (LSDV…ASIH) and 604–648 (VPLT…GLGL). Over residues 528–538 (WPDWSEPEEPE) the composition is skewed to acidic residues. Residues 547 to 735 (WPREPCDVAE…EELAWEDNNW (189 aa)) are interaction with EZR. Position 701 is a phosphoserine (serine 701).

Belongs to the protein kinase superfamily. Interacts with EZR/VIL2 C-terminal domain. In terms of processing, may be myristoylated; myristoylation may target it to Golgi compartment.

It localises to the cytoplasm. The protein resides in the golgi apparatus. It is found in the cell projection. The protein localises to the lamellipodium. Functionally, may play a role in regulating cell adhesion/migration complexes in migrating cells. This chain is Protein-associating with the carboxyl-terminal domain of ezrin (Scyl3), found in Mus musculus (Mouse).